The primary structure comprises 382 residues: B3 domain-containing protein Os03g0622100 (382 aa).

Positions 29 to 123 (CKHFLTYMVG…SFDVLIFDPS (95 aa)) form a DNA-binding region, TF-B3 1. Composition is skewed to basic and acidic residues over residues 136–158 (RGFG…DKNG) and 193–202 (QDHREEKKEG). The interval 136 to 222 (RGFGREEKSA…EDVDKDGEDR (87 aa)) is disordered. Residues 203-218 (DDEDEDEDEDEDVDKD) are compositionally biased toward acidic residues. The TF-B3 2 DNA-binding region spans 261-363 (KVIHASHLLS…AGDRLRRRPR (103 aa)).

Its subcellular location is the nucleus. The polypeptide is B3 domain-containing protein Os03g0622100 (Oryza sativa subsp. japonica (Rice)).